We begin with the raw amino-acid sequence, 543 residues long: Chaperonin GroEL 2 (543 aa).

ATP contacts are provided by residues 29 to 32 (TLGP), 86 to 90 (DGTTT), G413, 477 to 479 (DAA), and D493. The tract at residues 523–543 (PQEPEPAAGGHGHGHQHGPGF) is disordered. Basic residues predominate over residues 534–543 (GHGHQHGPGF).

It belongs to the chaperonin (HSP60) family. As to quaternary structure, forms a cylinder of 14 subunits composed of two heptameric rings stacked back-to-back. Interacts with the co-chaperonin GroES.

The protein localises to the cytoplasm. The enzyme catalyses ATP + H2O + a folded polypeptide = ADP + phosphate + an unfolded polypeptide.. Together with its co-chaperonin GroES, plays an essential role in assisting protein folding. The GroEL-GroES system forms a nano-cage that allows encapsulation of the non-native substrate proteins and provides a physical environment optimized to promote and accelerate protein folding. The polypeptide is Chaperonin GroEL 2 (Salinispora tropica (strain ATCC BAA-916 / DSM 44818 / JCM 13857 / NBRC 105044 / CNB-440)).